We begin with the raw amino-acid sequence, 143 residues long: MFLGTYTPKLDDKGRLTLPAKFRDALAGGLMVTKGQDHSLAVYPREEFTALARKAAAASRSDPEARAFVRGLAAGTDEQHADAQGRITLSADHRRYAGLSKDCVVIGSVDFLEIWDAQAWQTYVEANEENYSQATGIALGEIV.

SpoVT-AbrB domains are found at residues Thr5 to Glu47 and Thr76 to Ala119.

Belongs to the MraZ family. As to quaternary structure, forms oligomers.

It localises to the cytoplasm. Its subcellular location is the nucleoid. The polypeptide is Transcriptional regulator MraZ (Rhodococcus opacus (strain B4)).